Consider the following 384-residue polypeptide: GTPase Obg (384 aa).

In terms of domain architecture, Obg spans 1–159 (MKFIDEAKIE…RSLQLELKVL (159 aa)). Residues 20–46 (ATSFRREKFVPRGGPDGGDGGKGGSVW) form a disordered region. Residues 33-43 (GPDGGDGGKGG) show a composition bias toward gly residues. An OBG-type G domain is found at 160 to 348 (ADVGLLGMPN…LVHQINQYLI (189 aa)). GTP contacts are provided by residues 166–173 (GMPNAGKS), 191–195 (FTTLH), 213–216 (DIPG), 284–287 (NKLD), and 329–331 (SAL). Residues serine 173 and threonine 193 each coordinate Mg(2+). The interval 364–384 (ATNVEIAEQQPKTDTGVFKPE) is disordered.

It belongs to the TRAFAC class OBG-HflX-like GTPase superfamily. OBG GTPase family. In terms of assembly, monomer. Requires Mg(2+) as cofactor.

It localises to the cytoplasm. An essential GTPase which binds GTP, GDP and possibly (p)ppGpp with moderate affinity, with high nucleotide exchange rates and a fairly low GTP hydrolysis rate. Plays a role in control of the cell cycle, stress response, ribosome biogenesis and in those bacteria that undergo differentiation, in morphogenesis control. This chain is GTPase Obg, found in Neisseria meningitidis serogroup A / serotype 4A (strain DSM 15465 / Z2491).